Reading from the N-terminus, the 155-residue chain is Urease accessory protein UreE (155 aa).

It belongs to the UreE family.

The protein resides in the cytoplasm. Its function is as follows. Involved in urease metallocenter assembly. Binds nickel. Probably functions as a nickel donor during metallocenter assembly. The sequence is that of Urease accessory protein UreE from Synechococcus sp. (strain CC9311).